Here is a 447-residue protein sequence, read N- to C-terminus: Phosphoglucosamine mutase (447 aa).

Serine 108 (phosphoserine intermediate) is an active-site residue. Residues serine 108, aspartate 247, aspartate 249, and aspartate 251 each coordinate Mg(2+). Serine 108 carries the post-translational modification Phosphoserine.

Belongs to the phosphohexose mutase family. It depends on Mg(2+) as a cofactor. In terms of processing, activated by phosphorylation.

The enzyme catalyses alpha-D-glucosamine 1-phosphate = D-glucosamine 6-phosphate. Its function is as follows. Catalyzes the conversion of glucosamine-6-phosphate to glucosamine-1-phosphate. The protein is Phosphoglucosamine mutase of Bordetella petrii (strain ATCC BAA-461 / DSM 12804 / CCUG 43448).